Consider the following 229-residue polypeptide: Sperm-associated microtubule inner protein 5 (229 aa).

The disordered stretch occupies residues 181–201 (PEFSGPGQTPPSEDPQAPRPC).

As to quaternary structure, microtubule inner protein component of sperm flagellar doublet microtubules. In terms of tissue distribution, expressed in testis (at protein level).

Its subcellular location is the cytoplasm. The protein localises to the cytoskeleton. It is found in the flagellum axoneme. It localises to the nucleus. Functionally, microtubule inner protein (MIP) part of the dynein-decorated doublet microtubules (DMTs) in flagellum axoneme. May serve to reinforce and thus stabilize the microtubule structure in the sperm flagella. The polypeptide is Sperm-associated microtubule inner protein 5 (Spmip5) (Mus musculus (Mouse)).